We begin with the raw amino-acid sequence, 132 residues long: Fatty acid-binding protein, adipocyte (132 aa).

The short motif at 22-32 is the Nuclear localization signal element; it reads KELGVGFATRK. The (9Z,12Z)-octadecadienoate site is built by arginine 107 and arginine 127.

This sequence belongs to the calycin superfamily. Fatty-acid binding protein (FABP) family. Monomer.

The protein localises to the cytoplasm. It is found in the nucleus. Lipid transport protein in adipocytes. Binds both long chain fatty acids and retinoic acid. Delivers long-chain fatty acids and retinoic acid to their cognate receptors in the nucleus. Has the highest binding affinity for linoleic acid and decreasing relative affinity for eicosapentaenoic acid (EPA), alpha-linolenic acid (ALA), docosahexaenoic acid (DHA), oleic acid, palmitic acid and stearic acid, respectively. This is Fatty acid-binding protein, adipocyte from Pygoscelis papua (Gentoo penguin).